A 314-amino-acid chain; its full sequence is Phosphoribosylaminoimidazole-succinocarboxamide synthase (314 aa).

It belongs to the SAICAR synthetase family.

The enzyme catalyses 5-amino-1-(5-phospho-D-ribosyl)imidazole-4-carboxylate + L-aspartate + ATP = (2S)-2-[5-amino-1-(5-phospho-beta-D-ribosyl)imidazole-4-carboxamido]succinate + ADP + phosphate + 2 H(+). It participates in purine metabolism; IMP biosynthesis via de novo pathway; 5-amino-1-(5-phospho-D-ribosyl)imidazole-4-carboxamide from 5-amino-1-(5-phospho-D-ribosyl)imidazole-4-carboxylate: step 1/2. This is Phosphoribosylaminoimidazole-succinocarboxamide synthase from Bacteroides thetaiotaomicron (strain ATCC 29148 / DSM 2079 / JCM 5827 / CCUG 10774 / NCTC 10582 / VPI-5482 / E50).